We begin with the raw amino-acid sequence, 225 residues long: Endonuclease V (225 aa).

Residues D43 and D110 each coordinate Mg(2+).

This sequence belongs to the endonuclease V family. It depends on Mg(2+) as a cofactor.

The protein resides in the cytoplasm. It carries out the reaction Endonucleolytic cleavage at apurinic or apyrimidinic sites to products with a 5'-phosphate.. In terms of biological role, DNA repair enzyme involved in the repair of deaminated bases. Selectively cleaves double-stranded DNA at the second phosphodiester bond 3' to a deoxyinosine leaving behind the intact lesion on the nicked DNA. The protein is Endonuclease V of Thermotoga neapolitana (strain ATCC 49049 / DSM 4359 / NBRC 107923 / NS-E).